The following is a 305-amino-acid chain: Aquaporin-1 (305 aa).

A disordered region spans residues 1–34; the sequence is MSSNDSNDTDKQHTRLDPTGVDDAYIPPEQPETK. Over 1-48 the chain is Cytoplasmic; sequence MSSNDSNDTDKQHTRLDPTGVDDAYIPPEQPETKHHRFKISRDTLRDH. A helical transmembrane segment spans residues 49–69; sequence FIAAVGEFCGTFMFLWCAYVI. The Extracellular portion of the chain corresponds to 70–91; the sequence is CNVANHDVALVAAPDGSHPGQL. A helical transmembrane segment spans residues 92–112; that stretch reads IMIAIGFGFSVMFSIWCFAGV. At 113–136 the chain is on the cytoplasmic side; sequence SGGALNPAMSLSLCLARAVSPTRC. The NPA 1 motif lies at 118–120; the sequence is NPA. Residues 137-157 form a helical membrane-spanning segment; it reads VVMWVSQIVAGMAAGGAASAM. Topologically, residues 158 to 176 are extracellular; it reads TPGEVLFANSLGLGCSRTR. A helical membrane pass occupies residues 177 to 197; the sequence is GLFLEMFGTAILCLTVLMTAV. Topologically, residues 198–203 are cytoplasmic; the sequence is EKRETN. A helical transmembrane segment spans residues 204 to 224; the sequence is FMAALPIGISLFIAHVALTAY. Topologically, residues 225 to 248 are extracellular; sequence TGTGVNPARSLGAAVAARYFPHYH. The short motif at 230–232 is the NPA 2 element; that stretch reads NPA. Residues 249–269 form a helical membrane-spanning segment; it reads WIYWIGTLLGSILAWSVWQLL. Over 270–305 the chain is Cytoplasmic; it reads QILDYTTYVTAEKAASTKEKAQKKGETSSSSAVAEV. Positions 286–295 are enriched in basic and acidic residues; it reads TKEKAQKKGE. The disordered stretch occupies residues 286-305; it reads TKEKAQKKGETSSSSAVAEV. Residues 296–305 are compositionally biased toward polar residues; that stretch reads TSSSSAVAEV.

The protein belongs to the MIP/aquaporin (TC 1.A.8) family.

Its subcellular location is the endoplasmic reticulum membrane. The protein resides in the cell membrane. In terms of biological role, water channel required to facilitate the transport of water across membranes. Involved in sporulation, freeze tolerance and osmotolerance. Is non-functional in most laboratory strains. The polypeptide is Aquaporin-1 (AQY1) (Saccharomyces cerevisiae (strain ATCC 204508 / S288c) (Baker's yeast)).